The primary structure comprises 671 residues: DNA ligase (671 aa).

NAD(+)-binding positions include 32–36, 81–82, and Glu-113; these read DAEYD and SL. Lys-115 acts as the N6-AMP-lysine intermediate in catalysis. The NAD(+) site is built by Arg-136, Glu-173, Lys-290, and Lys-314. 4 residues coordinate Zn(2+): Cys-408, Cys-411, Cys-426, and Cys-432. Positions 593–671 constitute a BRCT domain; sequence EIDSPFAGKT…ETEMLHLLGS (79 aa).

This sequence belongs to the NAD-dependent DNA ligase family. LigA subfamily. It depends on Mg(2+) as a cofactor. Mn(2+) is required as a cofactor.

It catalyses the reaction NAD(+) + (deoxyribonucleotide)n-3'-hydroxyl + 5'-phospho-(deoxyribonucleotide)m = (deoxyribonucleotide)n+m + AMP + beta-nicotinamide D-nucleotide.. Its function is as follows. DNA ligase that catalyzes the formation of phosphodiester linkages between 5'-phosphoryl and 3'-hydroxyl groups in double-stranded DNA using NAD as a coenzyme and as the energy source for the reaction. It is essential for DNA replication and repair of damaged DNA. This chain is DNA ligase, found in Escherichia coli O6:K15:H31 (strain 536 / UPEC).